A 22-amino-acid chain; its full sequence is Brevinin-1OKd (22 aa).

The residue at position 22 (Lys-22) is a Lysine amide.

In terms of tissue distribution, expressed by the skin glands.

Its subcellular location is the secreted. Functionally, antimicrobial peptide. In Nidirana okinavana (Kampira Falls frog), this protein is Brevinin-1OKd.